The following is a 400-amino-acid chain: Acetate kinase (400 aa).

Position 9 (N9) interacts with Mg(2+). Position 16 (K16) interacts with ATP. R90 contributes to the substrate binding site. D147 functions as the Proton donor/acceptor in the catalytic mechanism. ATP is bound by residues 207-211 (HIGNG), 282-284 (DLR), and 330-334 (GIGEN). A Mg(2+)-binding site is contributed by E385.

The protein belongs to the acetokinase family. Homodimer. The cofactor is Mg(2+). Mn(2+) is required as a cofactor.

It is found in the cytoplasm. It catalyses the reaction acetate + ATP = acetyl phosphate + ADP. It functions in the pathway metabolic intermediate biosynthesis; acetyl-CoA biosynthesis; acetyl-CoA from acetate: step 1/2. In terms of biological role, catalyzes the formation of acetyl phosphate from acetate and ATP. Can also catalyze the reverse reaction. The polypeptide is Acetate kinase (Staphylococcus aureus (strain JH1)).